The following is a 394-amino-acid chain: Deoxyguanosinetriphosphate triphosphohydrolase-like protein (394 aa).

Residues Met1 to Thr34 form a disordered region. Residues Asp16–Thr34 show a composition bias toward basic and acidic residues. Positions Arg70 to Asn210 constitute an HD domain.

The protein belongs to the dGTPase family. Type 2 subfamily.

In Caulobacter sp. (strain K31), this protein is Deoxyguanosinetriphosphate triphosphohydrolase-like protein.